The chain runs to 185 residues: Ribosome-recycling factor (185 aa).

It belongs to the RRF family.

The protein localises to the cytoplasm. Functionally, responsible for the release of ribosomes from messenger RNA at the termination of protein biosynthesis. May increase the efficiency of translation by recycling ribosomes from one round of translation to another. This chain is Ribosome-recycling factor, found in Sulfurovum sp. (strain NBC37-1).